A 141-amino-acid chain; its full sequence is Large ribosomal subunit protein uL11 (141 aa).

The protein belongs to the universal ribosomal protein uL11 family. Part of the ribosomal stalk of the 50S ribosomal subunit. Interacts with L10 and the large rRNA to form the base of the stalk. L10 forms an elongated spine to which L12 dimers bind in a sequential fashion forming a multimeric L10(L12)X complex. One or more lysine residues are methylated.

Functionally, forms part of the ribosomal stalk which helps the ribosome interact with GTP-bound translation factors. In Streptococcus agalactiae serotype III (strain NEM316), this protein is Large ribosomal subunit protein uL11.